The primary structure comprises 72 residues: Translation initiation factor IF-1 (72 aa).

The region spanning 1–72 is the S1-like domain; that stretch reads MSKDDVIEMQ…TRGRITWRAK (72 aa).

It belongs to the IF-1 family. As to quaternary structure, component of the 30S ribosomal translation pre-initiation complex which assembles on the 30S ribosome in the order IF-2 and IF-3, IF-1 and N-formylmethionyl-tRNA(fMet); mRNA recruitment can occur at any time during PIC assembly.

Its subcellular location is the cytoplasm. Its function is as follows. One of the essential components for the initiation of protein synthesis. Stabilizes the binding of IF-2 and IF-3 on the 30S subunit to which N-formylmethionyl-tRNA(fMet) subsequently binds. Helps modulate mRNA selection, yielding the 30S pre-initiation complex (PIC). Upon addition of the 50S ribosomal subunit IF-1, IF-2 and IF-3 are released leaving the mature 70S translation initiation complex. This chain is Translation initiation factor IF-1, found in Clostridium beijerinckii (strain ATCC 51743 / NCIMB 8052) (Clostridium acetobutylicum).